The primary structure comprises 145 residues: MSTAGGGRRCQAQVSRRISFSASHRLYSKFLSDEENLKLFGKCSNPNGHGHNYKVVVTVHGEIDPATGMVMNLADLKKYMEEAIMQPLDHKNLDMDVPYFADVVSTTENVAVYIWDNLQKVLPVGVLYKVKLYETDNNIVVYKGE.

Residue Ser-19 is modified to Phosphoserine. Zn(2+) is bound at residue His-24. The residue at position 28 (Ser-28) is a Phosphoserine. Catalysis depends on Cys-43, which acts as the Proton acceptor. Residues His-49 and His-51 each coordinate Zn(2+). The Charge relay system role is filled by His-90. A Phosphotyrosine modification is found at Tyr-128. Glu-134 serves as the catalytic Charge relay system.

The protein belongs to the PTPS family. As to quaternary structure, homohexamer formed of two homotrimers in a head to head fashion. It depends on Zn(2+) as a cofactor. Phosphorylation of Ser-19 is required for maximal enzyme activity.

It catalyses the reaction 7,8-dihydroneopterin 3'-triphosphate = 6-pyruvoyl-5,6,7,8-tetrahydropterin + triphosphate + H(+). It functions in the pathway cofactor biosynthesis; tetrahydrobiopterin biosynthesis; tetrahydrobiopterin from 7,8-dihydroneopterin triphosphate: step 1/3. In terms of biological role, involved in the biosynthesis of tetrahydrobiopterin, an essential cofactor of aromatic amino acid hydroxylases. Catalyzes the transformation of 7,8-dihydroneopterin triphosphate into 6-pyruvoyl tetrahydropterin. This chain is 6-pyruvoyl tetrahydrobiopterin synthase (PTS), found in Pongo abelii (Sumatran orangutan).